The sequence spans 176 residues: Adenine phosphoribosyltransferase (176 aa).

It belongs to the purine/pyrimidine phosphoribosyltransferase family. In terms of assembly, homodimer.

It localises to the cytoplasm. It carries out the reaction AMP + diphosphate = 5-phospho-alpha-D-ribose 1-diphosphate + adenine. Its pathway is purine metabolism; AMP biosynthesis via salvage pathway; AMP from adenine: step 1/1. Catalyzes a salvage reaction resulting in the formation of AMP, that is energically less costly than de novo synthesis. The protein is Adenine phosphoribosyltransferase of Gluconacetobacter diazotrophicus (strain ATCC 49037 / DSM 5601 / CCUG 37298 / CIP 103539 / LMG 7603 / PAl5).